We begin with the raw amino-acid sequence, 149 residues long: Probable glycine-rich RNA-binding protein 1 (149 aa).

An RRM domain is found at 8-83; that stretch reads YRCFVGGLAW…LDGRNITAQA (76 aa). The tract at residues 80–149 is disordered; sequence TAQARGSGTR…GRSEGGSWRN (70 aa). Composition is skewed to gly residues over residues 87-101, 110-123, and 131-143; these read GTRG…SGGY, YNRG…GGYG, and YGDG…GRSE.

Belongs to the GR-RBP family.

Its function is as follows. Possibly has a role in RNA transcription or processing during stress. This Arabidopsis thaliana (Mouse-ear cress) protein is Probable glycine-rich RNA-binding protein 1 (RBG1).